The chain runs to 432 residues: Phosphomethylpyrimidine synthase (432 aa).

Substrate is bound by residues Asn66, Met95, Tyr124, His163, 185-187 (SRG), 226-229 (DGLR), and Glu265. His269 contributes to the Zn(2+) binding site. Tyr292 contacts substrate. His333 provides a ligand contact to Zn(2+). 3 residues coordinate [4Fe-4S] cluster: Cys409, Cys412, and Cys416.

Belongs to the ThiC family. The cofactor is [4Fe-4S] cluster.

It carries out the reaction 5-amino-1-(5-phospho-beta-D-ribosyl)imidazole + S-adenosyl-L-methionine = 4-amino-2-methyl-5-(phosphooxymethyl)pyrimidine + CO + 5'-deoxyadenosine + formate + L-methionine + 3 H(+). It participates in cofactor biosynthesis; thiamine diphosphate biosynthesis. Its function is as follows. Catalyzes the synthesis of the hydroxymethylpyrimidine phosphate (HMP-P) moiety of thiamine from aminoimidazole ribotide (AIR) in a radical S-adenosyl-L-methionine (SAM)-dependent reaction. This is Phosphomethylpyrimidine synthase from Desulforamulus reducens (strain ATCC BAA-1160 / DSM 100696 / MI-1) (Desulfotomaculum reducens).